Consider the following 533-residue polypeptide: Thromboxane-A synthase (533 aa).

The Cytoplasmic segment spans residues 1-10 (MEVLGLLKFE). The chain crosses the membrane as a helical span at residues 11-31 (VSGTVVTVTLSVVLLALLKWY). The Lumenal portion of the chain corresponds to 32–75 (STSAFSRLRKLGIRHPEPSPFVGNLMFFRQGFWESHLELRERYG). The helical transmembrane segment at 76 to 96 (PLCGYYLGRRMYIVISDPDMI) threads the bilayer. Residues 97 to 223 (KEVLVENFSN…QRVFAFSTPR (127 aa)) are Cytoplasmic-facing. Residues 224–244 (PLLALILSFPSIMVPLARILP) form a helical membrane-spanning segment. Topologically, residues 245–335 (NKNRDELNGF…LTVDEIAGQA (91 aa)) are lumenal. Residues 336–356 (FLFLIAGHEITTNTLSFITYL) form a helical membrane-spanning segment. Over 357-533 (LATHPECQER…NGVYVKIVSR (177 aa)) the chain is Cytoplasmic. Cys479 is a binding site for heme.

The protein belongs to the cytochrome P450 family. Monomer. Requires heme as cofactor. In terms of tissue distribution, expressed in bone marrow, spleen, lung, thymus, liver, uterus, and macrophages.

The protein localises to the endoplasmic reticulum membrane. The enzyme catalyses prostaglandin H2 = thromboxane A2. It catalyses the reaction prostaglandin H2 = (12S)-hydroxy-(5Z,8E,10E)-heptadecatrienoate + malonaldehyde. It carries out the reaction a hydroperoxyeicosatetraenoate = an oxoeicosatetraenoate + H2O. The catalysed reaction is (15S)-hydroperoxy-(5Z,8Z,11Z,13E)-eicosatetraenoate = 15-oxo-(5Z,8Z,11Z,13E)-eicosatetraenoate + H2O. The enzyme catalyses (15S)-hydroperoxy-(5Z,8Z,11Z,13E)-eicosatetraenoate + AH2 = (15S)-hydroxy-(5Z,8Z,11Z,13E)-eicosatetraenoate + A + H2O. Functionally, catalyzes the conversion of prostaglandin H2 (PGH2) to thromboxane A2 (TXA2), a potent inducer of blood vessel constriction and platelet aggregation. Also cleaves PGH2 to 12-hydroxy-heptadecatrienoicacid (12-HHT) and malondialdehyde, which is known to act as a mediator of DNA damage. 12-HHT and malondialdehyde are formed stoichiometrically in the same amounts as TXA2. Additionally, displays dehydratase activity, toward (15S)-hydroperoxy-(5Z,8Z,11Z,13E)-eicosatetraenoate (15(S)-HPETE) producing 15-KETE and 15-HETE. The protein is Thromboxane-A synthase (Tbxas1) of Rattus norvegicus (Rat).